The chain runs to 976 residues: MTNGSTEDNSYRYTPGLAAKIEAKWQKHWADKGTFNAPNPTGDLAEPGAELPEDRKFIQDMFPYPSGVGLHVGHPLGYIGTDVFARFHRMKGANVLHTLGYDAFGLPAEQYAVQTGTHPRTTTMANIANMERQLGRLGLGHDKRRSFATTDTDYYRWTQWIFLQIYNSWFDPEAKNANGTLGKARPIKELEEKLAAERADWADLSAAEKQEILDSYRLVYRSNSTVNWCPGLGTVLANEEVTAEGRSERGNFPVFRKNLQQWMMRITAYSDRLIDDLEYLDWPEKVKSMQRNWIGRSRGAEVTFDCLGNDIDVFTTRPDTLFGATYMVLAPEHELVDTLVAQSGNSSSGSDAYTDVDPRWTYGQANPAAAVEAYRAAIAAKSDLERQENKEKTGVFLGVYATNPVNGAQVPVFIADYVLTGYGTGAIMAVPAHDSRDFEFATEFGLPIVPVLAPEGAEAGAGEQGGAELTEAFTEDGPHINSNNSDGLELNGLGKAEAIDKAIEWLESKGVGSGKIQYKLRDWLFARQRYWGEPFPIVYDEDGTAHGLPEDMLPVELPEVEDYKPVSFDPDDKDSAPQPPLAKAKDWVEVTLDLGDGEKTYYRDTNVMPQWAGSSWYQLRYIDPNNDNALVDIENERYWVGPREGRPSGGVDLYVGGVEHAVLHLLYARFWHKVLFDLGVVSSFEPYYRLYNQGYIQAYAYTDSRGVYVPAEEVTERDGKFFWVRKADDAEGVTKEEEVFQEYGKMGKSLKNAVSPDEICDDYGADTLRVYEMAMGPLDTSRPWATKDVVGAQRFLQRAWRLAVDENTGKGSVSDDALTDEDLKALHRTIAGVHENYAELRDNTAVAKLIEYVNYLTKTYSAGQAPRAAVEPLVQMLSPVAPHIAEEMWEILGHSEGITYESFPEWDEKWLVDDTIELPVQVMGKLRGRINVAADASREDIEAAALEEPNVASHIEGKTVAKIIVVPGKMVNIVAK.

Positions 63–74 (PYPSGVGLHVGH) match the 'HIGH' region motif. The 'KMSKS' region signature appears at 745-749 (KMGKS). Lys748 is an ATP binding site.

This sequence belongs to the class-I aminoacyl-tRNA synthetase family.

It localises to the cytoplasm. The enzyme catalyses tRNA(Leu) + L-leucine + ATP = L-leucyl-tRNA(Leu) + AMP + diphosphate. The protein is Leucine--tRNA ligase of Corynebacterium jeikeium (strain K411).